The primary structure comprises 101 residues: DNA-binding protein HU (101 aa).

This sequence belongs to the bacterial histone-like protein family. In terms of assembly, homodimer.

Functionally, histone-like DNA-binding protein which is capable of wrapping DNA to stabilize it, and thus to prevent its denaturation under extreme environmental conditions. This chain is DNA-binding protein HU (hup), found in Rickettsia bellii (strain RML369-C).